Here is a 328-residue protein sequence, read N- to C-terminus: Flap endonuclease 1 (328 aa).

The tract at residues 1-98 is N-domain; it reads MGVKFKDITN…ETQEERINIK (98 aa). Mg(2+)-binding residues include Asp-27, Asp-80, Glu-152, Glu-154, Asp-173, Asp-175, and Asp-227. The segment at 116 to 248 is I-domain; it reads AARKYAARTT…KGIKLIHKYG (133 aa). Residues 320–328 are interaction with PCNA; it reads AQSSLEDWF.

The protein belongs to the XPG/RAD2 endonuclease family. FEN1 subfamily. In terms of assembly, interacts with PCNA. PCNA stimulates the nuclease activity without altering cleavage specificity. Requires Mg(2+) as cofactor.

Its function is as follows. Structure-specific nuclease with 5'-flap endonuclease and 5'-3' exonuclease activities involved in DNA replication and repair. During DNA replication, cleaves the 5'-overhanging flap structure that is generated by displacement synthesis when DNA polymerase encounters the 5'-end of a downstream Okazaki fragment. Binds the unpaired 3'-DNA end and kinks the DNA to facilitate 5' cleavage specificity. Cleaves one nucleotide into the double-stranded DNA from the junction in flap DNA, leaving a nick for ligation. Also involved in the base excision repair (BER) pathway. Acts as a genome stabilization factor that prevents flaps from equilibrating into structures that lead to duplications and deletions. Also possesses 5'-3' exonuclease activity on nicked or gapped double-stranded DNA. The polypeptide is Flap endonuclease 1 (Methanosphaera stadtmanae (strain ATCC 43021 / DSM 3091 / JCM 11832 / MCB-3)).